The chain runs to 257 residues: GTP cyclohydrolase FolE2 (257 aa).

The protein belongs to the GTP cyclohydrolase IV family.

The enzyme catalyses GTP + H2O = 7,8-dihydroneopterin 3'-triphosphate + formate + H(+). It functions in the pathway cofactor biosynthesis; 7,8-dihydroneopterin triphosphate biosynthesis; 7,8-dihydroneopterin triphosphate from GTP: step 1/1. Functionally, converts GTP to 7,8-dihydroneopterin triphosphate. This chain is GTP cyclohydrolase FolE2, found in Syntrophobacter fumaroxidans (strain DSM 10017 / MPOB).